We begin with the raw amino-acid sequence, 140 residues long: Nucleoside diphosphate kinase (140 aa).

6 residues coordinate ATP: Lys11, Phe59, Arg87, Thr93, Arg104, and Asn114. The Pros-phosphohistidine intermediate role is filled by His117.

Belongs to the NDK family. As to quaternary structure, homotetramer. The cofactor is Mg(2+).

Its subcellular location is the cytoplasm. The catalysed reaction is a 2'-deoxyribonucleoside 5'-diphosphate + ATP = a 2'-deoxyribonucleoside 5'-triphosphate + ADP. It carries out the reaction a ribonucleoside 5'-diphosphate + ATP = a ribonucleoside 5'-triphosphate + ADP. Its function is as follows. Major role in the synthesis of nucleoside triphosphates other than ATP. The ATP gamma phosphate is transferred to the NDP beta phosphate via a ping-pong mechanism, using a phosphorylated active-site intermediate. In Dinoroseobacter shibae (strain DSM 16493 / NCIMB 14021 / DFL 12), this protein is Nucleoside diphosphate kinase.